The following is a 234-amino-acid chain: ATP synthase subunit a 1 (234 aa).

The next 5 helical transmembrane spans lie at 20–40, 76–96, 105–125, 162–184, and 195–215; these read ETVVTTWLIMLVLVVASILLT, LLPLIGTFWIFLPVANLLGVI, DLSVTAALALVVFFAVHAYGV, LFGNIMSLEMAALLILLVAGFLA, and EALVQAYIFGMLALIYVAGAM.

The protein belongs to the ATPase A chain family. As to quaternary structure, F-type ATPases have 2 components, CF(1) - the catalytic core - and CF(0) - the membrane proton channel. CF(1) has five subunits: alpha(3), beta(3), gamma(1), delta(1), epsilon(1). CF(0) has three main subunits: a(1), b(2) and c(9-12). The alpha and beta chains form an alternating ring which encloses part of the gamma chain. CF(1) is attached to CF(0) by a central stalk formed by the gamma and epsilon chains, while a peripheral stalk is formed by the delta and b chains.

The protein resides in the cell inner membrane. Key component of the proton channel; it plays a direct role in the translocation of protons across the membrane. This Hahella chejuensis (strain KCTC 2396) protein is ATP synthase subunit a 1.